Here is a 611-residue protein sequence, read N- to C-terminus: Probable Xaa-Pro aminopeptidase P (611 aa).

Residues D408, D419, E517, and E531 each coordinate Mn(2+).

The protein belongs to the peptidase M24B family. The cofactor is Mn(2+).

The enzyme catalyses Release of any N-terminal amino acid, including proline, that is linked to proline, even from a dipeptide or tripeptide.. Functionally, catalyzes the removal of a penultimate prolyl residue from the N-termini of peptides. The polypeptide is Probable Xaa-Pro aminopeptidase P (AMPP) (Coccidioides posadasii (strain RMSCC 757 / Silveira) (Valley fever fungus)).